The sequence spans 995 residues: MAGKARVHELAKELGVESKTVLAKLKEMGEFVKSASSTVEAPVARRLRNAFVNNAGSPAPAAPPAVAPPTPTPTPPRTPTPAPPPGGPRVSAKPMPPRRQGVPTPGPKPKGPVPGPPQSATPVTKPASAHDIEVAAAEARAAALKAEQEAAVKAAQAARQQQRENVRREPPTEGGPRPGPRPGPGTMPPRPGSPAAGRSGAPAPGPGPRPGGRPPARGAGNNPFGIQGGQQRPPAAGAGGPRPSPASMPPRPSPASMPPRPSPASMPSQRPGRPGGPGSGRPGSGAGRPGGGGGGGYRGGGGGGGGGGYRGGPGGGGGGGGGFRGGPGGGGGGFRSGPGGGGRPGGGGRGRGGGAAGAFGRPGGRPTRGRKSKKQRRQEFDNLSAPTMSSGAPRGQGQVVRLSRGASLSDFADKINANPGSLVQEMFNLGEMVTATQSCSDDTLLLLGEHLGFAVQIVSPEDEDRELLAQFNIDLDAEVAEDRLVSRPPVVTVMGHVDHGKTKLLDAIRKANVVAGEAGGITQHIGAYQVHVPHDGEDRAITFIDTPGHEAFTAMRARGAQVTDIVILVVAADDGVMPQTIEALNHAKAAEVPIVVAVNKIDKPEANPDKVRQQLTEYGLVAEEYGGDTMFVNVAAKPGTGIESLLEAVLLTADASLELTAPTDGPAQGVAIEAHLDKGRGAVATVLVQKGTLRAGDSIVAGGAHGRVRAMLDENGNQVAEAGPSRPVLVLGLTAVPGAGDTFLAAEDDRTVRQIAEQRQARRRAAAFANSRGRATLETLMEQLKAGEKTSLNLVLKGDVSGSVEALEDALFNLDIPEEVQLRIIHRGVGSITESDVMLASASSEAVTIIGFNVRAANKVREMADREGVEIRYYTVIYQAIEEIEAALKGLLKPEYEEVELGTAEVREVFRSSKVGNISGCIVRSGLIRRNAKARLLRDGAVVADNLTIGSLKRFKDDATEVREGFECGLTLGGYNNVQVGDVIETFEMREKARA.

The tract at residues Asn53–Val399 is disordered. Composition is skewed to pro residues over residues Pro60–Gly87 and Thr104–Ser119. The segment covering Ala135 to Gln160 has biased composition (low complexity). Positions Gln161 to Pro171 are enriched in basic and acidic residues. Residues Arg177–Gly192 show a composition bias toward pro residues. Residues Ser193–Pro202 are compositionally biased toward low complexity. Composition is skewed to pro residues over residues Ala203–Arg213 and Arg242–Ala264. Over residues Arg273 to Gly363 the composition is skewed to gly residues. Residues Thr367 to Arg376 are compositionally biased toward basic residues. The 173-residue stretch at Ser486–Glu658 folds into the tr-type G domain. Positions Gly495–Thr502 are G1. GTP is bound at residue Gly495 to Thr502. The interval Gly520–His524 is G2. The G3 stretch occupies residues Asp545 to Gly548. GTP is bound by residues Asp545 to His549 and Asn599 to Asp602. Positions Asn599 to Asp602 are G4. Residues Ala635 to Lys637 form a G5 region.

The protein belongs to the TRAFAC class translation factor GTPase superfamily. Classic translation factor GTPase family. IF-2 subfamily.

It is found in the cytoplasm. One of the essential components for the initiation of protein synthesis. Protects formylmethionyl-tRNA from spontaneous hydrolysis and promotes its binding to the 30S ribosomal subunits. Also involved in the hydrolysis of GTP during the formation of the 70S ribosomal complex. The polypeptide is Translation initiation factor IF-2 (Salinispora arenicola (strain CNS-205)).